Reading from the N-terminus, the 172-residue chain is Transmembrane protein 91 (172 aa).

Over Met1–Gly97 the chain is Extracellular. Residues Gly60–Arg86 form a disordered region. Residues Glu65–Gly83 show a composition bias toward acidic residues. The helical transmembrane segment at Leu98–Ala118 threads the bilayer. Over His119–Arg139 the chain is Cytoplasmic. A helical membrane pass occupies residues Ala140 to Val160. Residues Thr161–Pro172 are Extracellular-facing.

This sequence belongs to the CD225/Dispanin family.

The protein resides in the membrane. This is Transmembrane protein 91 (Tmem91) from Mus musculus (Mouse).